Here is a 1280-residue protein sequence, read N- to C-terminus: E3 ubiquitin-protein ligase RKP (1280 aa).

Residues 82 to 269 form the B30.2/SPRY domain; the sequence is KLHGDLDVSV…CELNFGAYPF (188 aa). A helical membrane pass occupies residues 551–571; sequence SVLVSLFSVILHFLSEGFAML. Residues 669–719 form a disordered region; sequence DRGKNTAQSSRGRCSSIPERSSHVAAECSAGSFSEEIDDKPSTSNQSDPDF. A helical transmembrane segment spans residues 834 to 854; the sequence is ALCMWVVQLLLVLSKMDSVFV. An RING-type zinc finger spans residues 1217–1252; that stretch reads CCICYAGEANAMIAPCSHRSCYGCITRHLLNCQRCF.

The protein resides in the membrane. The enzyme catalyses S-ubiquitinyl-[E2 ubiquitin-conjugating enzyme]-L-cysteine + [acceptor protein]-L-lysine = [E2 ubiquitin-conjugating enzyme]-L-cysteine + N(6)-ubiquitinyl-[acceptor protein]-L-lysine.. In terms of biological role, E3 ubiquitin-protein ligase that promotes the ubiquitination and proteasomal degradation of KRP1 and KRP2. This is E3 ubiquitin-protein ligase RKP (RKP) from Arabidopsis thaliana (Mouse-ear cress).